Reading from the N-terminus, the 733-residue chain is ATP-dependent RNA helicase DBP7 (733 aa).

Disordered regions lie at residues 1-92 (MDED…SKMI) and 119-139 (SSQL…SNAP). Polar residues predominate over residues 17-30 (SVSSGSNKRTTSKV). Positions 52 to 80 (QKKDRSATGKDDGKKHENDESNDSKKRPT) are enriched in basic and acidic residues. The Q motif motif lies at 144–173 (STFEGLGINERLSKHLTETLRFKNPTKVQK). One can recognise a Helicase ATP-binding domain in the interval 177–372 (PTMLSTERDL…SIILNNPEMI (196 aa)). 190–197 (AQTGSGKT) is a binding site for ATP. The short motif at 304–307 (DEGD) is the DEAD box element. Residues 406-596 (TLSAILKKIS…NYENYLKDGF (191 aa)) form the Helicase C-terminal domain. A disordered region spans residues 687–714 (KKLGKSVESNSGIQGASKKTKKEDPRKK).

Belongs to the DEAD box helicase family. DDX31/DBP7 subfamily.

The protein localises to the nucleus. It is found in the nucleolus. The enzyme catalyses ATP + H2O = ADP + phosphate + H(+). In terms of biological role, ATP-binding RNA helicase involved in the biogenesis of 60S ribosomal subunits and is required for the normal formation of 25S and 5.8S rRNAs. This chain is ATP-dependent RNA helicase DBP7 (DPB7), found in Scheffersomyces stipitis (strain ATCC 58785 / CBS 6054 / NBRC 10063 / NRRL Y-11545) (Yeast).